Here is a 101-residue protein sequence, read N- to C-terminus: Secreted enzymes activator (101 aa).

Over residues 1-10 (MSRRRRRASA) the composition is skewed to basic residues. Disordered regions lie at residues 1 to 26 (MSRR…PYGS) and 45 to 101 (TRLA…NGRG). A compositionally biased stretch (low complexity) spans 45–60 (TRLAASSRASRAAVGS). The H-T-H motif DNA-binding region spans 55-74 (RAAVGSFDGAKNRPASSRRQ).

Its function is as follows. Increases the production of several extracellular enzymes, like alkaline phosphatase, amylase, protease or lipase. When present in high concentrations, delays the production of pigments and sporulation. This is Secreted enzymes activator (saf) from Streptomyces griseus.